Here is a 281-residue protein sequence, read N- to C-terminus: 4-hydroxy-3-methylbut-2-enyl diphosphate reductase (281 aa).

[4Fe-4S] cluster is bound at residue cysteine 12. (2E)-4-hydroxy-3-methylbut-2-enyl diphosphate contacts are provided by histidine 41 and histidine 74. The dimethylallyl diphosphate site is built by histidine 41 and histidine 74. Isopentenyl diphosphate-binding residues include histidine 41 and histidine 74. Residue cysteine 96 participates in [4Fe-4S] cluster binding. Histidine 124 is a (2E)-4-hydroxy-3-methylbut-2-enyl diphosphate binding site. Dimethylallyl diphosphate is bound at residue histidine 124. Histidine 124 lines the isopentenyl diphosphate pocket. Glutamate 126 serves as the catalytic Proton donor. Threonine 164 provides a ligand contact to (2E)-4-hydroxy-3-methylbut-2-enyl diphosphate. Residue cysteine 193 coordinates [4Fe-4S] cluster. (2E)-4-hydroxy-3-methylbut-2-enyl diphosphate is bound by residues serine 221, asparagine 223, and serine 265. The dimethylallyl diphosphate site is built by serine 221, asparagine 223, and serine 265. Residues serine 221, asparagine 223, and serine 265 each coordinate isopentenyl diphosphate.

This sequence belongs to the IspH family. Requires [4Fe-4S] cluster as cofactor.

It catalyses the reaction isopentenyl diphosphate + 2 oxidized [2Fe-2S]-[ferredoxin] + H2O = (2E)-4-hydroxy-3-methylbut-2-enyl diphosphate + 2 reduced [2Fe-2S]-[ferredoxin] + 2 H(+). The enzyme catalyses dimethylallyl diphosphate + 2 oxidized [2Fe-2S]-[ferredoxin] + H2O = (2E)-4-hydroxy-3-methylbut-2-enyl diphosphate + 2 reduced [2Fe-2S]-[ferredoxin] + 2 H(+). Its pathway is isoprenoid biosynthesis; dimethylallyl diphosphate biosynthesis; dimethylallyl diphosphate from (2E)-4-hydroxy-3-methylbutenyl diphosphate: step 1/1. It functions in the pathway isoprenoid biosynthesis; isopentenyl diphosphate biosynthesis via DXP pathway; isopentenyl diphosphate from 1-deoxy-D-xylulose 5-phosphate: step 6/6. Catalyzes the conversion of 1-hydroxy-2-methyl-2-(E)-butenyl 4-diphosphate (HMBPP) into a mixture of isopentenyl diphosphate (IPP) and dimethylallyl diphosphate (DMAPP). Acts in the terminal step of the DOXP/MEP pathway for isoprenoid precursor biosynthesis. The sequence is that of 4-hydroxy-3-methylbut-2-enyl diphosphate reductase from Nitratidesulfovibrio vulgaris (strain DSM 19637 / Miyazaki F) (Desulfovibrio vulgaris).